A 496-amino-acid chain; its full sequence is MADKKKITASLIYAVSVAAIGSLQFGYNTGVINAPEKIIQAFYNRTLSQRSGETISPELLTSLWSLSVAIFSVGGMIGSFSVSLFFNRFGRRNSMLLVNVLAFAGGALMALSKIAKAVEMLIIGRFIIGLFCGLCTGFVPMYISEVSPTSLRGAFGTLNQLGIVVGILVAQIFGLEGIMGTEALWPLLLGFTIVPAVLQCVALLFCPESPRFLLINKMEEEKAQTVLQKLRGTQDVSQDISEMKEESAKMSQEKKATVLELFRSPNYRQPIIISITLQLSQQLSGINAVFYYSTGIFERAGITQPVYATIGAGVVNTVFTVVSLFLVERAGRRTLHLVGLGGMAVCAAVMTIALALKEKWIRYISIVATFGFVALFEIGPGPIPWFIVAELFSQGPRPAAMAVAGCSNWTSNFLVGMLFPYAEKLCGPYVFLIFLVFLLIFFIFTYFKVPETKGRTFEDISRGFEEQVETSSPSSPPIEKNPMVEMNSIEPDKEVA.

The Cytoplasmic portion of the chain corresponds to 1-11 (MADKKKITASL). Residues 12 to 33 (IYAVSVAAIGSLQFGYNTGVIN) traverse the membrane as a helical segment. At 34–65 (APEKIIQAFYNRTLSQRSGETISPELLTSLWS) the chain is on the extracellular side. N44 is a glycosylation site (N-linked (GlcNAc...) asparagine). A helical transmembrane segment spans residues 66-86 (LSVAIFSVGGMIGSFSVSLFF). At 87-91 (NRFGR) the chain is on the cytoplasmic side. A helical membrane pass occupies residues 92 to 112 (RNSMLLVNVLAFAGGALMALS). Residues 113–119 (KIAKAVE) lie on the Extracellular side of the membrane. A helical membrane pass occupies residues 120–143 (MLIIGRFIIGLFCGLCTGFVPMYI). Topologically, residues 144 to 154 (SEVSPTSLRGA) are cytoplasmic. Residues 155–175 (FGTLNQLGIVVGILVAQIFGL) traverse the membrane as a helical segment. Q160 provides a ligand contact to D-glucose. Residues 176-184 (EGIMGTEAL) lie on the Extracellular side of the membrane. Residues 185 to 205 (WPLLLGFTIVPAVLQCVALLF) traverse the membrane as a helical segment. At 206–270 (CPESPRFLLI…LFRSPNYRQP (65 aa)) the chain is on the cytoplasmic side. A helical membrane pass occupies residues 271 to 291 (IIISITLQLSQQLSGINAVFY). The tract at residues 278–280 (QLS) is important for selectivity against fructose. D-glucose is bound by residues 281 to 282 (QQ) and N287. Residues 292-305 (YSTGIFERAGITQP) are Extracellular-facing. A helical membrane pass occupies residues 306-326 (VYATIGAGVVNTVFTVVSLFL). D-glucose is bound at residue N316. The Cytoplasmic portion of the chain corresponds to 327–332 (VERAGR). Residues 333-353 (RTLHLVGLGGMAVCAAVMTIA) traverse the membrane as a helical segment. Residues 354-362 (LALKEKWIR) lie on the Extracellular side of the membrane. The helical transmembrane segment at 363 to 388 (YISIVATFGFVALFEIGPGPIPWFIV) threads the bilayer. E377 and W385 together coordinate D-glucose. Topologically, residues 389–398 (AELFSQGPRP) are cytoplasmic. Residues 399 to 419 (AAMAVAGCSNWTSNFLVGMLF) traverse the membrane as a helical segment. The Extracellular segment spans residues 420–428 (PYAEKLCGP). The chain crosses the membrane as a helical span at residues 429–449 (YVFLIFLVFLLIFFIFTYFKV). Residues 450–496 (PETKGRTFEDISRGFEEQVETSSPSSPPIEKNPMVEMNSIEPDKEVA) are Cytoplasmic-facing. Residues 464–496 (FEEQVETSSPSSPPIEKNPMVEMNSIEPDKEVA) form a disordered region.

It belongs to the major facilitator superfamily. Sugar transporter (TC 2.A.1.1) family. Glucose transporter subfamily.

It localises to the cell membrane. Its subcellular location is the perikaryon. The protein localises to the cell projection. The catalysed reaction is D-glucose(out) = D-glucose(in). It catalyses the reaction D-galactose(in) = D-galactose(out). Deoxyglucose transport is inhibited by D-glucose, D-galactose and maltose. Galactose transport is inhibited by D-glucose and maltose. Its function is as follows. Facilitative glucose transporter. Can also mediate the uptake of various other monosaccharides across the cell membrane. Mediates the uptake of glucose, 2-deoxyglucose, galactose, mannose, xylose and fucose, and probably also dehydroascorbate. Does not mediate fructose transport. Required for mesendoderm differentiation. This chain is Solute carrier family 2, facilitated glucose transporter member 3, found in Gallus gallus (Chicken).